The chain runs to 69 residues: DNA-directed RNA polymerase subunit omega (69 aa).

It belongs to the RNA polymerase subunit omega family. In terms of assembly, the RNAP catalytic core consists of 2 alpha, 1 beta, 1 beta' and 1 omega subunit. When a sigma factor is associated with the core the holoenzyme is formed, which can initiate transcription.

It catalyses the reaction RNA(n) + a ribonucleoside 5'-triphosphate = RNA(n+1) + diphosphate. Promotes RNA polymerase assembly. Latches the N- and C-terminal regions of the beta' subunit thereby facilitating its interaction with the beta and alpha subunits. The protein is DNA-directed RNA polymerase subunit omega of Heliobacterium modesticaldum (strain ATCC 51547 / Ice1).